Consider the following 351-residue polypeptide: Pentatricopeptide repeat-containing protein At2g40240, mitochondrial (351 aa).

A mitochondrion-targeting transit peptide spans 1–27 (MSLLRRRFVKQSVNCITFLQILAERSF). PPR repeat units lie at residues 106–140 (RKNA…RLGL), 141–175 (TPST…SVSM), 176–210 (DVTA…GNSP), 211–245 (DSRS…GVTV), 246–280 (LYST…DLRL), and 281–315 (DSES…GLRM).

Belongs to the PPR family. P subfamily.

The protein resides in the mitochondrion. The sequence is that of Pentatricopeptide repeat-containing protein At2g40240, mitochondrial from Arabidopsis thaliana (Mouse-ear cress).